The chain runs to 398 residues: S-adenosylmethionine decarboxylase proenzyme (398 aa).

Residues Glu18 and Glu21 contribute to the active site. The active-site Schiff-base intermediate with substrate; via pyruvic acid is the Ser78. Ser78 is subject to Pyruvic acid (Ser); by autocatalysis. Cys92 functions as the Proton donor; for catalytic activity in the catalytic mechanism. Active-site proton acceptor; for processing activity residues include Ser243 and His256.

It belongs to the eukaryotic AdoMetDC family. Requires pyruvate as cofactor. Post-translationally, is synthesized initially as an inactive proenzyme. Formation of the active enzyme involves a self-maturation process in which the active site pyruvoyl group is generated from an internal serine residue via an autocatalytic post-translational modification. Two non-identical subunits are generated from the proenzyme in this reaction, and the pyruvate is formed at the N-terminus of the alpha chain, which is derived from the carboxyl end of the proenzyme. The post-translation cleavage follows an unusual pathway, termed non-hydrolytic serinolysis, in which the side chain hydroxyl group of the serine supplies its oxygen atom to form the C-terminus of the beta chain, while the remainder of the serine residue undergoes an oxidative deamination to produce ammonia and the pyruvoyl group blocking the N-terminus of the alpha chain.

It catalyses the reaction S-adenosyl-L-methionine + H(+) = S-adenosyl 3-(methylsulfanyl)propylamine + CO2. Its pathway is amine and polyamine biosynthesis; S-adenosylmethioninamine biosynthesis; S-adenosylmethioninamine from S-adenosyl-L-methionine: step 1/1. The polypeptide is S-adenosylmethionine decarboxylase proenzyme (SAMDC) (Oryza sativa subsp. indica (Rice)).